A 338-amino-acid polypeptide reads, in one-letter code: Probable dual-specificity RNA methyltransferase RlmN (338 aa).

The Proton acceptor role is filled by Glu89. One can recognise a Radical SAM core domain in the interval 95–325 (HNYGMSACVT…AILRKEQGHD (231 aa)). Cys102 and Cys330 are disulfide-bonded. [4Fe-4S] cluster contacts are provided by Cys109, Cys113, and Cys116. Residues 156 to 157 (GE), Ser188, 211 to 213 (SLH), and Asn287 contribute to the S-adenosyl-L-methionine site. The S-methylcysteine intermediate role is filled by Cys330.

This sequence belongs to the radical SAM superfamily. RlmN family. [4Fe-4S] cluster is required as a cofactor.

It localises to the cytoplasm. The enzyme catalyses adenosine(2503) in 23S rRNA + 2 reduced [2Fe-2S]-[ferredoxin] + 2 S-adenosyl-L-methionine = 2-methyladenosine(2503) in 23S rRNA + 5'-deoxyadenosine + L-methionine + 2 oxidized [2Fe-2S]-[ferredoxin] + S-adenosyl-L-homocysteine. It carries out the reaction adenosine(37) in tRNA + 2 reduced [2Fe-2S]-[ferredoxin] + 2 S-adenosyl-L-methionine = 2-methyladenosine(37) in tRNA + 5'-deoxyadenosine + L-methionine + 2 oxidized [2Fe-2S]-[ferredoxin] + S-adenosyl-L-homocysteine. Functionally, specifically methylates position 2 of adenine 2503 in 23S rRNA and position 2 of adenine 37 in tRNAs. The chain is Probable dual-specificity RNA methyltransferase RlmN from Acholeplasma laidlawii (strain PG-8A).